The following is a 458-amino-acid chain: tRNA modification GTPase MnmE (458 aa).

Residues R26, E88, and R127 each coordinate (6S)-5-formyl-5,6,7,8-tetrahydrofolate. One can recognise a TrmE-type G domain in the interval 224–378; sequence GLSTAIIGRP…IEDRINQLFF (155 aa). N234 provides a ligand contact to K(+). Residues 234-239, 253-259, and 278-281 contribute to the GTP site; these read NVGKSS, TDIAGTT, and DTAG. Residue S238 participates in Mg(2+) binding. K(+)-binding residues include T253, I255, and T258. T259 lines the Mg(2+) pocket. K458 serves as a coordination point for (6S)-5-formyl-5,6,7,8-tetrahydrofolate.

This sequence belongs to the TRAFAC class TrmE-Era-EngA-EngB-Septin-like GTPase superfamily. TrmE GTPase family. Homodimer. Heterotetramer of two MnmE and two MnmG subunits. K(+) serves as cofactor.

The protein resides in the cytoplasm. Functionally, exhibits a very high intrinsic GTPase hydrolysis rate. Involved in the addition of a carboxymethylaminomethyl (cmnm) group at the wobble position (U34) of certain tRNAs, forming tRNA-cmnm(5)s(2)U34. This is tRNA modification GTPase MnmE from Streptococcus pyogenes serotype M28 (strain MGAS6180).